A 359-amino-acid chain; its full sequence is MNKGIVDQLTRLSIRLEELDKLLSNEKITADLDNYRKLSRERSEIEPVTRFYHTYQQVEQDLATAMEMSVDPQFRDFAEAEIDADKQKLADIETEILKQLLPRDPNDERNIFLEIRAGTGGDESALFAGDLFRMYSRYAEREGWQVEIVSQNPSEVGGYKEIIARIIGHGAYSRLKFESGAHRVQRVPATETQGRVHTSTCTVAVLPEADEISGVTLNPADLRIDTFRASGAGGQHINKTDSAVRITHLPTGIVAECQEGRSQHKNKAQAMSVLISRILDKQVRAQQAEQAAARKSLVGSGERSERIRTYNFPQGRITDHRINLTLYKIEQIMDGELDELCSTLAAEHQAAQLAAMIER.

Gln-235 is subject to N5-methylglutamine.

This sequence belongs to the prokaryotic/mitochondrial release factor family. Methylated by PrmC. Methylation increases the termination efficiency of RF1.

It localises to the cytoplasm. In terms of biological role, peptide chain release factor 1 directs the termination of translation in response to the peptide chain termination codons UAG and UAA. This chain is Peptide chain release factor 1, found in Nitrosomonas eutropha (strain DSM 101675 / C91 / Nm57).